A 154-amino-acid polypeptide reads, in one-letter code: Large ribosomal subunit protein uL13 (154 aa).

This sequence belongs to the universal ribosomal protein uL13 family. In terms of assembly, part of the 50S ribosomal subunit.

In terms of biological role, this protein is one of the early assembly proteins of the 50S ribosomal subunit, although it is not seen to bind rRNA by itself. It is important during the early stages of 50S assembly. In Rhodopseudomonas palustris (strain BisB18), this protein is Large ribosomal subunit protein uL13.